Here is a 528-residue protein sequence, read N- to C-terminus: Ivanolysin (528 aa).

Residues 1–23 (MKKIMLLLMTLLLVSLPLAQEAQ) form the signal peptide. A run of 4 beta stranded transmembrane segments spans residues 213–226 (ESQLVAKFGAAFKA), 233–242 (VNFGAISEGK), 311–320 (STRVKAAFDT), and 328–340 (KGDTELENIIQNA). The Conserved undecapeptide motif lies at 482–492 (ECTGLAWEWWR). The Cholesterol binding motif lies at 514–515 (TL).

Belongs to the cholesterol-dependent cytolysin family. In terms of assembly, homooligomeric pore complex of 35 to 50 subunits; when inserted in the host membrane.

It localises to the secreted. Its subcellular location is the host membrane. A cholesterol-dependent toxin that causes cytolysis by forming pores in cholesterol containing host membranes. After binding to target membranes, the protein undergoes a major conformation change, leading to its insertion in the host membrane and formation of an oligomeric pore complex. Cholesterol is required for binding to host membranes, membrane insertion and pore formation; cholesterol binding is mediated by a Thr-Leu pair in the C-terminus. Can be reversibly inactivated by oxidation. The polypeptide is Ivanolysin (ilo) (Listeria ivanovii).